A 251-amino-acid chain; its full sequence is 5-oxoprolinase subunit A (251 aa).

Belongs to the LamB/PxpA family. As to quaternary structure, forms a complex composed of PxpA, PxpB and PxpC.

It carries out the reaction 5-oxo-L-proline + ATP + 2 H2O = L-glutamate + ADP + phosphate + H(+). In terms of biological role, catalyzes the cleavage of 5-oxoproline to form L-glutamate coupled to the hydrolysis of ATP to ADP and inorganic phosphate. In Tolumonas auensis (strain DSM 9187 / NBRC 110442 / TA 4), this protein is 5-oxoprolinase subunit A.